The sequence spans 459 residues: ATP synthase subunit beta (459 aa).

Position 148–155 (148–155 (GGAGVGKT)) interacts with ATP.

Belongs to the ATPase alpha/beta chains family. In terms of assembly, F-type ATPases have 2 components, CF(1) - the catalytic core - and CF(0) - the membrane proton channel. CF(1) has five subunits: alpha(3), beta(3), gamma(1), delta(1), epsilon(1). CF(0) has three main subunits: a(1), b(2) and c(9-12). The alpha and beta chains form an alternating ring which encloses part of the gamma chain. CF(1) is attached to CF(0) by a central stalk formed by the gamma and epsilon chains, while a peripheral stalk is formed by the delta and b chains.

It localises to the cell inner membrane. It carries out the reaction ATP + H2O + 4 H(+)(in) = ADP + phosphate + 5 H(+)(out). Its function is as follows. Produces ATP from ADP in the presence of a proton gradient across the membrane. The catalytic sites are hosted primarily by the beta subunits. The protein is ATP synthase subunit beta of Hahella chejuensis (strain KCTC 2396).